The following is a 344-amino-acid chain: Nuclear distribution protein nudE-like 1-A (344 aa).

Residues 26-187 (YKKSYKEAQE…RQELAVRDTR (162 aa)) adopt a coiled-coil conformation. Residues 181–190 (LAVRDTRSEV) are compositionally biased toward basic and acidic residues. Disordered stretches follow at residues 181–209 (LAVR…TDSA) and 322–344 (PGDG…VLSV).

Belongs to the nudE family. Post-translationally, phosphorylated in mitosis.

Its subcellular location is the cytoplasm. It is found in the cytoskeleton. The protein resides in the microtubule organizing center. The protein localises to the centrosome. It localises to the spindle. Required for organization of the cellular microtubule array and microtubule anchoring at the centrosome. Positively regulates the activity of the minus-end directed microtubule motor protein dynein. May enhance dynein-mediated microtubule sliding by targeting dynein to the microtubule plus end. The polypeptide is Nuclear distribution protein nudE-like 1-A (ndel1a) (Danio rerio (Zebrafish)).